The chain runs to 90 residues: Putative protein p49 (90 aa).

This Escherichia coli (Bacteriophage APSE-1) protein is Putative protein p49 (49).